The chain runs to 214 residues: DELTA-actitoxin-Aeq1a (214 aa).

A signal peptide spans 1 to 19 (MSRLIIVFIVVTMICSATA). Positions 20 to 35 (LPSKKIIDEDEEDEKR) are excised as a propeptide. The segment at 38–47 (DVAGAVIDGA) is plays an important role in the hemolytic activity. Positions 46 to 65 (GASLSFDILKTVLEALGNVK) are N-terminal region. Positions 89, 122, 140, 142, 168, 172, and 173 each coordinate phosphocholine. Residues 140–155 (SVPYDYNWYSNWWNVR) form a trp-rich region, which is important for the binding to lipid membrane region. The short motif at 179 to 181 (RGD) is the Cell attachment site, crucial for protein stability element.

The protein belongs to the actinoporin family. Sea anemone subfamily. In terms of assembly, octamer or nonamer in membranes. Monomer in the soluble state.

The protein localises to the secreted. It is found in the nematocyst. The protein resides in the target cell membrane. Pore-forming protein that forms cations-selective hydrophilic pores of around 1 nm and causes cardiac stimulation and cytolysis. Pore formation is a multi-step process that involves specific recognition of membrane sphingomyelin (but neither cholesterol nor phosphatidylcholine) using aromatic rich region and adjacent phosphocholine (POC) binding site, firm binding to the membrane (mainly driven by hydrophobic interactions) accompanied by the transfer of the N-terminal region to the lipid-water interface and finally pore formation after oligomerization of monomers. Cytolytic effects include red blood cells hemolysis, platelet aggregation and lysis, cytotoxic and cytostatic effects on fibroblasts. Lethality in mammals has been ascribed to severe vasospasm of coronary vessels, cardiac arrhythmia, and inotropic effects. This Actinia equina (Beadlet anemone) protein is DELTA-actitoxin-Aeq1a.